The following is a 276-amino-acid chain: Energy-coupling factor transporter ATP-binding protein EcfA1 (276 aa).

The ABC transporter domain occupies 2–237 (IEIKNLKFKY…GSELVDLGLD (236 aa)). 37-44 (GHNGSGKS) contributes to the ATP binding site.

It belongs to the ABC transporter superfamily. Energy-coupling factor EcfA family. In terms of assembly, forms a stable energy-coupling factor (ECF) transporter complex composed of 2 membrane-embedded substrate-binding proteins (S component), 2 ATP-binding proteins (A component) and 2 transmembrane proteins (T component).

It localises to the cell membrane. In terms of biological role, ATP-binding (A) component of a common energy-coupling factor (ECF) ABC-transporter complex. Unlike classic ABC transporters this ECF transporter provides the energy necessary to transport a number of different substrates. In Streptococcus thermophilus (strain ATCC BAA-491 / LMD-9), this protein is Energy-coupling factor transporter ATP-binding protein EcfA1.